The primary structure comprises 241 residues: CRISPR-associated endoribonuclease Cas6 2 (241 aa).

The Proton acceptor role is filled by Tyr28. His40 serves as the catalytic Proton donor.

This sequence belongs to the CRISPR-associated protein Cas6/Cse3/CasE family.

CRISPR (clustered regularly interspaced short palindromic repeat) is an adaptive immune system that provides protection against mobile genetic elements (viruses, transposable elements and conjugative plasmids). CRISPR clusters contain sequences complementary to antecedent mobile elements and target invading nucleic acids. CRISPR clusters are transcribed and processed into CRISPR RNA (crRNA). This protein processes pre-crRNA into individual crRNA units. In Methanocaldococcus jannaschii (strain ATCC 43067 / DSM 2661 / JAL-1 / JCM 10045 / NBRC 100440) (Methanococcus jannaschii), this protein is CRISPR-associated endoribonuclease Cas6 2 (cas6b).